A 184-amino-acid polypeptide reads, in one-letter code: Endoribonuclease YbeY (184 aa).

Zn(2+) is bound by residues His-151, His-155, and His-161.

Belongs to the endoribonuclease YbeY family. Zn(2+) is required as a cofactor.

The protein localises to the cytoplasm. Functionally, single strand-specific metallo-endoribonuclease involved in late-stage 70S ribosome quality control and in maturation of the 3' terminus of the 16S rRNA. This is Endoribonuclease YbeY from Prochlorococcus marinus (strain NATL2A).